A 316-amino-acid chain; its full sequence is 4-hydroxy-3-methylbut-2-enyl diphosphate reductase (316 aa).

C12 contacts [4Fe-4S] cluster. (2E)-4-hydroxy-3-methylbut-2-enyl diphosphate contacts are provided by H41 and H74. Positions 41 and 74 each coordinate dimethylallyl diphosphate. The isopentenyl diphosphate site is built by H41 and H74. C96 lines the [4Fe-4S] cluster pocket. Position 124 (H124) interacts with (2E)-4-hydroxy-3-methylbut-2-enyl diphosphate. H124 serves as a coordination point for dimethylallyl diphosphate. H124 provides a ligand contact to isopentenyl diphosphate. E126 serves as the catalytic Proton donor. T167 serves as a coordination point for (2E)-4-hydroxy-3-methylbut-2-enyl diphosphate. C197 serves as a coordination point for [4Fe-4S] cluster. (2E)-4-hydroxy-3-methylbut-2-enyl diphosphate-binding residues include S225, S226, N227, and S269. Dimethylallyl diphosphate-binding residues include S225, S226, N227, and S269. Isopentenyl diphosphate is bound by residues S225, S226, N227, and S269.

It belongs to the IspH family. As to quaternary structure, homodimer. It depends on [4Fe-4S] cluster as a cofactor.

It carries out the reaction isopentenyl diphosphate + 2 oxidized [2Fe-2S]-[ferredoxin] + H2O = (2E)-4-hydroxy-3-methylbut-2-enyl diphosphate + 2 reduced [2Fe-2S]-[ferredoxin] + 2 H(+). The catalysed reaction is dimethylallyl diphosphate + 2 oxidized [2Fe-2S]-[ferredoxin] + H2O = (2E)-4-hydroxy-3-methylbut-2-enyl diphosphate + 2 reduced [2Fe-2S]-[ferredoxin] + 2 H(+). It functions in the pathway isoprenoid biosynthesis; dimethylallyl diphosphate biosynthesis; dimethylallyl diphosphate from (2E)-4-hydroxy-3-methylbutenyl diphosphate: step 1/1. Its pathway is isoprenoid biosynthesis; isopentenyl diphosphate biosynthesis via DXP pathway; isopentenyl diphosphate from 1-deoxy-D-xylulose 5-phosphate: step 6/6. Functionally, catalyzes the conversion of 1-hydroxy-2-methyl-2-(E)-butenyl 4-diphosphate (HMBPP) into a mixture of isopentenyl diphosphate (IPP) and dimethylallyl diphosphate (DMAPP). Acts in the terminal step of the DOXP/MEP pathway for isoprenoid precursor biosynthesis. The protein is 4-hydroxy-3-methylbut-2-enyl diphosphate reductase of Escherichia coli O6:H1 (strain CFT073 / ATCC 700928 / UPEC).